Consider the following 228-residue polypeptide: Protein boule (228 aa).

The RRM domain occupies N33 to K110. In terms of domain architecture, DAZ spans P151–N178. Over residues P193 to P214 the composition is skewed to low complexity. Residues P193–V228 are disordered. The segment covering E219–V228 has biased composition (basic and acidic residues).

This sequence belongs to the RRM DAZ family. In terms of assembly, interacts with the translational regulator orb2. As to expression, testis specific.

The protein localises to the nucleus. The protein resides in the cytoplasm. Functionally, RNA-binding protein that plays a central role in spermatogenesis. Required for meiotic entry and germline differentiation, at the transition between G2 and M phases of meiosis I. Acts by regulating translation of specific mRNAs, possibly by binding to their 3'-UTR. Essential for translation of twine (twe) mRNA. Required for the expression of various genes such as CG6784, CG17210, CG15841 scpr-B, scpr-C, and rho-6. The chain is Protein boule (bol) from Drosophila melanogaster (Fruit fly).